The primary structure comprises 276 residues: uncharacterized protein (276 aa).

The 118-residue stretch at 20-137 (PVLIFIPGAN…PPINTFLPDS (118 aa)) folds into the AB hydrolase-1 domain. The tract at residues 57–76 (GESELTEPLPDSASNPDSDY) is disordered.

The protein belongs to the AB hydrolase superfamily.

This is an uncharacterized protein from Staphylococcus aureus (strain USA300).